The sequence spans 156 residues: Small ribosomal subunit protein uS7 (156 aa).

It belongs to the universal ribosomal protein uS7 family. As to quaternary structure, part of the 30S ribosomal subunit. Contacts proteins S9 and S11.

In terms of biological role, one of the primary rRNA binding proteins, it binds directly to 16S rRNA where it nucleates assembly of the head domain of the 30S subunit. Is located at the subunit interface close to the decoding center, probably blocks exit of the E-site tRNA. This is Small ribosomal subunit protein uS7 from Solidesulfovibrio magneticus (strain ATCC 700980 / DSM 13731 / RS-1) (Desulfovibrio magneticus).